A 372-amino-acid chain; its full sequence is N-methyl-L-tryptophan oxidase (372 aa).

Residue 4-34 (DLIIIGSGSVGAAAGYYATRAGLNVLMTDAH) coordinates FAD. Residue Cys-308 is modified to S-8alpha-FAD cysteine.

Belongs to the MSOX/MTOX family. MTOX subfamily. Monomer. FAD is required as a cofactor.

It carries out the reaction N(alpha)-methyl-L-tryptophan + O2 + H2O = L-tryptophan + formaldehyde + H2O2. In terms of biological role, catalyzes the oxidative demethylation of N-methyl-L-tryptophan. This is N-methyl-L-tryptophan oxidase from Escherichia coli O157:H7.